A 122-amino-acid chain; its full sequence is NADH-quinone oxidoreductase subunit A (122 aa).

3 helical membrane passes run 10–30, 66–86, and 91–111; these read MIVL…LTLG, IFAL…PWAV, and LGLF…VGLA.

It belongs to the complex I subunit 3 family. In terms of assembly, NDH-1 is composed of 14 different subunits. Subunits NuoA, H, J, K, L, M, N constitute the membrane sector of the complex.

It is found in the cell membrane. The catalysed reaction is a quinone + NADH + 5 H(+)(in) = a quinol + NAD(+) + 4 H(+)(out). NDH-1 shuttles electrons from NADH, via FMN and iron-sulfur (Fe-S) centers, to quinones in the respiratory chain. The immediate electron acceptor for the enzyme in this species is believed to be a menaquinone. Couples the redox reaction to proton translocation (for every two electrons transferred, four hydrogen ions are translocated across the cytoplasmic membrane), and thus conserves the redox energy in a proton gradient. The protein is NADH-quinone oxidoreductase subunit A of Bacillus anthracis.